Consider the following 154-residue polypeptide: Small ribosomal subunit protein uS15 (154 aa).

Positions 1–23 (MNKKRDKGQSHSTRPARAGPPRW) are disordered.

This sequence belongs to the universal ribosomal protein uS15 family. As to quaternary structure, part of the 30S ribosomal subunit.

The polypeptide is Small ribosomal subunit protein uS15 (Staphylothermus marinus (strain ATCC 43588 / DSM 3639 / JCM 9404 / F1)).